A 289-amino-acid chain; its full sequence is 2-hydroxy-6-oxononadienedioate/2-hydroxy-6-oxononatrienedioate hydrolase 1 (289 aa).

One can recognise an AB hydrolase-1 domain in the interval 39 to 275; it reads TVVMLHGSGP…RCGHWAQWEH (237 aa). Catalysis depends on His-269, which acts as the Proton acceptor.

It belongs to the AB hydrolase superfamily. MhpC family. Homodimer.

The catalysed reaction is (2Z,4E)-2-hydroxy-6-oxonona-2,4-dienedioate + H2O = (2Z)-2-hydroxypenta-2,4-dienoate + succinate + H(+). It carries out the reaction (2Z,4E,7E)-2-hydroxy-6-oxonona-2,4,7-trienedioate + H2O = (2Z)-2-hydroxypenta-2,4-dienoate + fumarate + H(+). It participates in aromatic compound metabolism; 3-phenylpropanoate degradation. In terms of biological role, catalyzes the cleavage of the C5-C6 bond of 2-hydroxy-6-oxononadienedioate and 2-hydroxy-6-oxononatrienedioate, a dienol ring fission product of the bacterial meta-cleavage pathway for degradation of phenylpropionic acid. In Dechloromonas aromatica (strain RCB), this protein is 2-hydroxy-6-oxononadienedioate/2-hydroxy-6-oxononatrienedioate hydrolase 1.